The primary structure comprises 108 residues: Large ribosomal subunit protein uL23 (108 aa).

This sequence belongs to the universal ribosomal protein uL23 family. Part of the 50S ribosomal subunit. Contacts protein L29, and trigger factor when it is bound to the ribosome.

Functionally, one of the early assembly proteins it binds 23S rRNA. One of the proteins that surrounds the polypeptide exit tunnel on the outside of the ribosome. Forms the main docking site for trigger factor binding to the ribosome. The sequence is that of Large ribosomal subunit protein uL23 from Polaromonas sp. (strain JS666 / ATCC BAA-500).